We begin with the raw amino-acid sequence, 428 residues long: D-amino acid dehydrogenase (428 aa).

FAD is bound at residue Val-3 to Tyr-17.

Belongs to the DadA oxidoreductase family. It depends on FAD as a cofactor.

The enzyme catalyses a D-alpha-amino acid + A + H2O = a 2-oxocarboxylate + AH2 + NH4(+). The protein operates within amino-acid degradation; D-alanine degradation; NH(3) and pyruvate from D-alanine: step 1/1. Functionally, oxidative deamination of D-amino acids. The chain is D-amino acid dehydrogenase from Burkholderia lata (strain ATCC 17760 / DSM 23089 / LMG 22485 / NCIMB 9086 / R18194 / 383).